A 406-amino-acid polypeptide reads, in one-letter code: Putative competence-damage inducible protein (406 aa).

The protein belongs to the CinA family.

This Natranaerobius thermophilus (strain ATCC BAA-1301 / DSM 18059 / JW/NM-WN-LF) protein is Putative competence-damage inducible protein.